The primary structure comprises 1851 residues: Chitin synthase (1851 aa).

The disordered stretch occupies residues 1–21 (MQYHQHQHQFPGPGPSHTSVY). Topologically, residues 1-108 (MQYHQHQHQF…KDTLYNGFLQ (108 aa)) are cytoplasmic. A helical transmembrane segment spans residues 109-129 (VLKMITFVALFVTTLGSSILA). Residues 130–168 (KLSLLVMAAGLGQAGHNISICPDKIPESPKNSVLISPKN) lie on the Extracellular side of the membrane. Asn146 is a glycosylation site (N-linked (GlcNAc...) asparagine). A helical transmembrane segment spans residues 169–189 (AAKWAWALLLAICIPELLCFA). The Cytoplasmic portion of the chain corresponds to 190-208 (RSLHRSLFRKVRGPSFLQF). The chain crosses the membrane as a helical span at residues 209–229 (LLVFTVESVHAFGLGALVFAI). Residues 230 to 234 (MPRGM) lie on the Extracellular side of the membrane. The chain crosses the membrane as a helical span at residues 235 to 255 (VITMLQLGNSLCLIPSLLLPL). The Cytoplasmic segment spans residues 256 to 261 (SRSRSR). The helical transmembrane segment at 262–282 (WLPLLLLLDGSAILAQSSAAI) threads the bilayer. The Extracellular segment spans residues 283 to 291 (WRGSIPLER). The chain crosses the membrane as a helical span at residues 292 to 312 (FGFVFLCTSLISIAWWQNFVH). Over 313–337 (PHSFLPATRFFAHYAAKLRECRSKT) the chain is Cytoplasmic. A helical transmembrane segment spans residues 338-358 (FVVLSPWKCLIFTFCMFQFVP). Residues 359-544 (PQIPFRELLQ…ELNQFTTAND (186 aa)) are Extracellular-facing. Asn385 and Asn435 each carry an N-linked (GlcNAc...) asparagine glycan. The tract at residues 432–522 (LFRNGTRRPP…DADEQEEEEE (91 aa)) is disordered. The segment covering 442-454 (KKEEVKKNKMDSK) has biased composition (basic and acidic residues). A compositionally biased stretch (basic residues) spans 455-465 (KKTKKLKKKKG). Over residues 466-478 (GNNNATSTNSSEK) the composition is skewed to low complexity. Residues Asn469 and Asn474 are each glycosylated (N-linked (GlcNAc...) asparagine). Over residues 513–522 (DADEQEEEEE) the composition is skewed to acidic residues. Residues 545 to 565 (ALWLVFVQAGSVLLCQLCAKF) traverse the membrane as a helical segment. At 566–573 (ACKVVMQR) the chain is on the cytoplasmic side. Residues 574-594 (VGLALPVVLSIPFGILFLAYS) form a helical membrane-spanning segment. Topologically, residues 595–631 (CRQKATNPCHLSEWMSKELFWQCPTRPFHWQRFFREQ) are extracellular. The chain crosses the membrane as a helical span at residues 632–652 (PNLLWLCWWLSQCWITIHLWL). At 653–1124 (PRQERLAKSE…VSIWYIAYQL (472 aa)) the chain is on the cytoplasmic side. The disordered stretch occupies residues 693–718 (SEDIDTEEEANEGGGEQEDGNSSTHT). A compositionally biased stretch (acidic residues) spans 696–711 (IDTEEEANEGGGEQED). The chain crosses the membrane as a helical span at residues 1125–1145 (VMLFSSVLGPGTIFLMIVGAI). Residues 1146 to 1154 (SISFNIDTR) are Extracellular-facing. The helical transmembrane segment at 1155–1175 (LALLIVTTPVLCFCVCCLTCG) threads the bilayer. The Cytoplasmic segment spans residues 1176–1179 (TETQ). Residues 1180–1200 (LLLAQVIGALFAMLMTAVIVG) traverse the membrane as a helical segment. Residues 1201 to 1209 (TSLQIQKDG) are Extracellular-facing. A helical membrane pass occupies residues 1210–1230 (LLSPHSIFLFTVLGSWSFSAL). Residues 1231–1235 (LHPLE) lie on the Cytoplasmic side of the membrane. A helical transmembrane segment spans residues 1236–1256 (FGCLLPCGLYFLAIPCMYMLL). The Extracellular segment spans residues 1257-1461 (PVYSLCNLNT…QRGLNELRNT (205 aa)). The N-linked (GlcNAc...) asparagine glycan is linked to Asn1274. Residues 1329–1383 (CADETVEVRKLDENFRKIERKLQSLERRTNGQGNNAEEEGKEEEETGKSEQERKE) adopt a coiled-coil conformation. The segment at 1350 to 1402 (LQSLERRTNGQGNNAEEEGKEEEETGKSEQERKEGREEGKEEEGKMSKRKKEE) is disordered. A compositionally biased stretch (acidic residues) spans 1364–1373 (AEEEGKEEEE). Residues 1374–1402 (TGKSEQERKEGREEGKEEEGKMSKRKKEE) show a composition bias toward basic and acidic residues. A helical transmembrane segment spans residues 1462 to 1482 (CCSAFFMVNIVFIIVVLVLQL). The Cytoplasmic portion of the chain corresponds to 1483-1527 (QKDCLHIEWPLGPLVNQTRVQCGGGGGRDFEGEEWIMSRLQLEPM). Residues 1528-1548 (GFVFIVFFLIILFIQFLAMLF) traverse the membrane as a helical segment. Topologically, residues 1549–1851 (HRFGTFTHII…FLGTTNKRAK (303 aa)) are extracellular. The disordered stretch occupies residues 1626-1658 (GKRQQNAQIPPRCEKGGNERGEESPTSLPAPPV). Over residues 1637–1648 (RCEKGGNERGEE) the composition is skewed to basic and acidic residues. Asn1660 carries an N-linked (GlcNAc...) asparagine glycan. The tract at residues 1765–1851 (HSIFPSSSES…FLGTTNKRAK (87 aa)) is disordered. The segment covering 1781 to 1822 (GGGRGRGREQERDKCLEGKKEKFRQRVEEGPARCHRLEELFG) has biased composition (basic and acidic residues). Positions 1823–1834 (KSRKGGPQKRGK) are enriched in basic residues.

Belongs to the chitin synthase family. Class IV subfamily. Post-translationally, may require proteolytic cleavage for activation.

The protein resides in the cell membrane. It carries out the reaction [(1-&gt;4)-N-acetyl-beta-D-glucosaminyl](n) + UDP-N-acetyl-alpha-D-glucosamine = [(1-&gt;4)-N-acetyl-beta-D-glucosaminyl](n+1) + UDP + H(+). Its function is as follows. Required for the synthesis of chitin. The polypeptide is Chitin synthase (Meloidogyne artiellia (British root-knot nematode)).